The primary structure comprises 607 residues: Elongation factor 4 (607 aa).

Residues 11–193 (EKIRNFSIIA…QIVEKVPAPQ (183 aa)) form the tr-type G domain. Residues 23–28 (DHGKST) and 140–143 (NKID) contribute to the GTP site.

It belongs to the TRAFAC class translation factor GTPase superfamily. Classic translation factor GTPase family. LepA subfamily.

The protein localises to the cell membrane. The enzyme catalyses GTP + H2O = GDP + phosphate + H(+). In terms of biological role, required for accurate and efficient protein synthesis under certain stress conditions. May act as a fidelity factor of the translation reaction, by catalyzing a one-codon backward translocation of tRNAs on improperly translocated ribosomes. Back-translocation proceeds from a post-translocation (POST) complex to a pre-translocation (PRE) complex, thus giving elongation factor G a second chance to translocate the tRNAs correctly. Binds to ribosomes in a GTP-dependent manner. This chain is Elongation factor 4, found in Lactococcus lactis subsp. cremoris (strain MG1363).